The following is a 75-amino-acid chain: MNRLFLVLIFLYKKLLSPFLPPSCRFTPSCSEYAKQAFETYPWYKAFVLSVVRISKCHPYHEGGHDPLPKSYNKS.

Belongs to the UPF0161 family.

The protein localises to the cell inner membrane. In terms of biological role, could be involved in insertion of integral membrane proteins into the membrane. The protein is Putative membrane protein insertion efficiency factor of Leptospira biflexa serovar Patoc (strain Patoc 1 / ATCC 23582 / Paris).